The primary structure comprises 144 residues: Large ribosomal subunit protein uL16 (144 aa).

Residues 1–17 show a composition bias toward basic residues; the sequence is MLQPKKTKFRRQQKGRA. Residues 1 to 22 form a disordered region; the sequence is MLQPKKTKFRRQQKGRAKGNAQ.

This sequence belongs to the universal ribosomal protein uL16 family. Part of the 50S ribosomal subunit.

Binds 23S rRNA and is also seen to make contacts with the A and possibly P site tRNAs. This Bacteroides fragilis (strain ATCC 25285 / DSM 2151 / CCUG 4856 / JCM 11019 / LMG 10263 / NCTC 9343 / Onslow / VPI 2553 / EN-2) protein is Large ribosomal subunit protein uL16.